Consider the following 259-residue polypeptide: MKMSGLLSKPDYGVVGIVFTVVFCCWCSSSTTHALSIAEPGRDRYDKRSPTGHGVEVVESGEDYGSNRPQPVYGDEDEEDSADVYVGSDESSSGEKTRLTAAKRRLRFNKRRLRASKRRLRFHKRRVDSADESNDDGFDRKAREPRLRFHDVRKRSATAEEGSENAEIEESHLGNSRSRRSAGSAPSSANEVQRSKRLSITNDLRAIADSYLYDQHKLRERQEENLRRRFLELGKRGSAFFDHIPIIFGEPQYDYQPFK.

Residues methionine 1–alanine 34 form the signal peptide. Residues leucine 35–alanine 102 constitute a propeptide that is removed on maturation. The tract at residues arginine 42–lysine 103 is disordered. Repeats lie at residues arginine 119–histidine 123 and arginine 146–histidine 150. The 2 X 5 AA repeats of R-L-R-F-H stretch occupies residues arginine 119–histidine 150. A disordered region spans residues phenylalanine 149–arginine 197. The propeptide occupies serine 181–serine 195. Residue leucine 233 is modified to Leucine amide. Residues glycine 237–lysine 259 constitute a propeptide that is removed on maturation.

The protein belongs to the molluscan ELH family.

The protein resides in the secreted. CDCH induces ovulation and egg-mass production; it may also stimulate synthesis of secretory products in the female accessory sex glands and affect neurons in the neuronal circuits controlling locomotion and feeding. In terms of biological role, calfluxin is involved in the influx of calcium into mitochondria of the albumen gland. Its function is as follows. CDCA (or alpha-CDCP) triggers the electrical activity of the caudodorsal cells (CDCS). In Lymnaea stagnalis (Great pond snail), this protein is Ovulation prohormone.